The following is a 215-amino-acid chain: RxLR effector protein PITG_00582 (215 aa).

The first 19 residues, methionine 1 to cysteine 19, serve as a signal peptide directing secretion. The short motif at arginine 39 to arginine 51 is the RxLR-dEER element. Residues valine 81–glutamine 149 adopt a coiled-coil conformation.

The protein belongs to the RxLR effector family.

The protein localises to the secreted. Its subcellular location is the host cell membrane. Effector that might be involved in host plant infection. This chain is RxLR effector protein PITG_00582, found in Phytophthora infestans (strain T30-4) (Potato late blight agent).